The following is a 375-amino-acid chain: Probable pectin lyase D (375 aa).

An N-terminal signal peptide occupies residues 1–19; the sequence is MKYAAVLTTVAALASRALG. Intrachain disulfides connect cysteine 82–cysteine 101 and cysteine 91–cysteine 225. N-linked (GlcNAc...) asparagine glycosylation occurs at asparagine 128. The active site involves arginine 255. Cysteine 321 and cysteine 329 are disulfide-bonded.

The protein belongs to the polysaccharide lyase 1 family.

It is found in the secreted. It catalyses the reaction Eliminative cleavage of (1-&gt;4)-alpha-D-galacturonan methyl ester to give oligosaccharides with 4-deoxy-6-O-methyl-alpha-D-galact-4-enuronosyl groups at their non-reducing ends.. Pectinolytic enzymes consist of four classes of enzymes: pectin lyase, polygalacturonase, pectin methylesterase and rhamnogalacturonase. Among pectinolytic enzymes, pectin lyase is the most important in depolymerization of pectin, since it cleaves internal glycosidic bonds of highly methylated pectins. The chain is Probable pectin lyase D (pelD) from Aspergillus flavus (strain ATCC 200026 / FGSC A1120 / IAM 13836 / NRRL 3357 / JCM 12722 / SRRC 167).